A 276-amino-acid chain; its full sequence is Sulfur carrier protein FdhD (276 aa).

Cysteine 122 (cysteine persulfide intermediate) is an active-site residue. 259–264 contacts Mo-bis(molybdopterin guanine dinucleotide); sequence FCRRGR.

Belongs to the FdhD family.

The protein localises to the cytoplasm. Required for formate dehydrogenase (FDH) activity. Acts as a sulfur carrier protein that transfers sulfur from IscS to the molybdenum cofactor prior to its insertion into FDH. The polypeptide is Sulfur carrier protein FdhD (Proteus mirabilis (strain HI4320)).